The chain runs to 454 residues: Allantoinase (454 aa).

Residues His58, His60, Lys149, His189, His245, and Asp318 each contribute to the Zn(2+) site. Lys149 carries the N6-carboxylysine modification.

It belongs to the metallo-dependent hydrolases superfamily. Allantoinase family. As to quaternary structure, homotetramer. Zn(2+) serves as cofactor. Post-translationally, carboxylation allows a single lysine to coordinate two zinc ions.

The enzyme catalyses (S)-allantoin + H2O = allantoate + H(+). It participates in nitrogen metabolism; (S)-allantoin degradation; allantoate from (S)-allantoin: step 1/1. Functionally, catalyzes the conversion of allantoin (5-ureidohydantoin) to allantoic acid by hydrolytic cleavage of the five-member hydantoin ring. This Enterococcus faecalis (strain ATCC 700802 / V583) protein is Allantoinase.